Here is a 56-residue protein sequence, read N- to C-terminus: Alpha-conotoxin Pn1.2 (56 aa).

An N-terminal signal peptide occupies residues 1 to 16; that stretch reads MFTVFLLVVLATTVVS. The propeptide occupies 17-39; the sequence is FTSDRASDGGNAAMSDLIALTIK. Cystine bridges form between cysteine 41–cysteine 47 and cysteine 42–cysteine 55. A ser-Xaa-Pro motif, crucial for potent interaction with nAChR region spans residues 43-45; the sequence is SHP. Position 55 is a cysteine amide (cysteine 55).

Belongs to the conotoxin A superfamily. Post-translationally, non-native isomers 'ribbon' (with disulfide connectivity C1-C4; C2-C3) and 'beads' (with disulfide connectivity C1-C2; C3-C4) also inhibit high voltage-activated (HVA) calcium channel currents in rat DRG neurons (20-30% inhibition at 1 uM toxin). Expressed by the venom duct.

The protein resides in the secreted. Alpha-conotoxins act on postsynaptic membranes, they bind to the nicotinic acetylcholine receptors (nAChR) and thus inhibit them. This toxin inhibits human alpha-7/CHRNA7 and alpha-9-alpha-10/CHRNA9/CHRNA10 AChR (complete inhibition at 3 uM of toxin). In addition, this toxin inhibits high voltage-activated (HVA) calcium channel currents in rat DRG neurons (22% inhibition at 1 uM toxin) probably by activating GABA(B) receptors (GABBR1 and/or GABBR2). In Conus pennaceus (Feathered cone), this protein is Alpha-conotoxin Pn1.2.